The chain runs to 302 residues: Recombination-associated protein RdgC (302 aa).

The protein belongs to the RdgC family.

The protein localises to the cytoplasm. It localises to the nucleoid. May be involved in recombination. This is Recombination-associated protein RdgC from Actinobacillus pleuropneumoniae serotype 7 (strain AP76).